The following is a 79-amino-acid chain: CDC42 small effector protein 1-A (79 aa).

Residues Cys-10 and Cys-11 are each lipidated (S-palmitoyl cysteine). A CRIB domain is found at 30–43 (IGEPMNFVHLTHVG).

This sequence belongs to the CDC42SE/SPEC family.

It is found in the cytoplasm. It localises to the cytoskeleton. The protein resides in the cell membrane. Its function is as follows. Probably involved in the organization of the actin cytoskeleton by acting downstream of CDC42, inducing actin filament assembly. This chain is CDC42 small effector protein 1-A (cdc42se1-a), found in Xenopus laevis (African clawed frog).